The sequence spans 289 residues: MKSGFVSLIGRTNAGKSSLLNFLVGERLAMVSHKINATRRKINGIAMFGEDQIIFIDTPGLHKSEKIMNKLMIDVAIKSIGDADLVLFLASIHDDTRDYEEFLKIAKRPPHILILTKTDETDDGKIAKKLGEYAKFCKEFCAIIPVNIKKKVYRAEILREIAKLLPEHEYFFDPQIISNTNLRDIYRDFILESVYESVSSEIPYNSDVLIEKITEKEQITKISAKIITDTNSHKQILIGKGGETIKRIGIKSRKRISDFSKVKIHLNLQIFVKKGWKNDENLVKSVFVY.

The Era-type G domain maps to 2-167 (KSGFVSLIGR…LREIAKLLPE (166 aa)). Residues 10–17 (GRTNAGKS) are G1. GTP is bound at residue 10 to 17 (GRTNAGKS). The interval 36–40 (NATRR) is G2. A G3 region spans residues 57–60 (DTPG). GTP contacts are provided by residues 57–61 (DTPGL) and 116–119 (TKTD). Positions 116–119 (TKTD) are G4. The G5 stretch occupies residues 146 to 148 (VNI). Residues 186–274 (YRDFILESVY…HLNLQIFVKK (89 aa)) form the KH type-2 domain.

Belongs to the TRAFAC class TrmE-Era-EngA-EngB-Septin-like GTPase superfamily. Era GTPase family. Monomer.

It localises to the cytoplasm. The protein localises to the cell inner membrane. An essential GTPase that binds both GDP and GTP, with rapid nucleotide exchange. Plays a role in 16S rRNA processing and 30S ribosomal subunit biogenesis and possibly also in cell cycle regulation and energy metabolism. The chain is GTPase Era from Campylobacter hominis (strain ATCC BAA-381 / DSM 21671 / CCUG 45161 / LMG 19568 / NCTC 13146 / CH001A).